Consider the following 2201-residue polypeptide: Genome polyprotein (2201 aa).

Gly-2 carries N-myristoyl glycine; by host lipidation. Over 2 to 1511 (GAQVSTQKTG…YVSRAFICLQ (1510 aa)) the chain is Cytoplasmic. An amphipathic alpha-helix region spans residues 566–582 (KLQGDVEEAIERARCTV). The short motif at 858–860 (RGD) is the Cell attachment site element. Catalysis depends on for protease 2A activity residues His-888 and Asp-906. Residues Cys-923 and Cys-925 each coordinate Zn(2+). Residue Cys-977 is the For protease 2A activity of the active site. Cys-983 and His-985 together coordinate Zn(2+). A membrane-binding region spans residues 1117-1189 (NDSWLKKFTE…EQSAPSQSDQ (73 aa)). The oligomerization stretch occupies residues 1117–1255 (NDSWLKKFTE…SPGAGKSVAT (139 aa)). An RNA-binding region spans residues 1138 to 1142 (AIKIQ). The SF3 helicase domain occupies 1221 to 1377 (EKKMSNYIQF…SMYSQNGKIN (157 aa)). Residues Cys-1385, Cys-1397, and Cys-1402 each contribute to the Zn(2+) site. The C4-type; degenerate zinc-finger motif lies at 1385-1402 (CDEECCPVNFKKCCPLVC). Residues 1429–1436 (EYNHRHSV) form an RNA-binding region. The oligomerization stretch occupies residues 1440 to 1445 (LEALFQ). Residues 1512-1527 (AITTFVSVAGIIYIIY) lie within the membrane without spanning it. The Cytoplasmic portion of the chain corresponds to 1528-2201 (KLFAGFQGAY…TLRRKWLDSF (674 aa)). Tyr-1537 bears the O-(5'-phospho-RNA)-tyrosine mark. The 179-residue stretch at 1557–1735 (GPAFEFAVAM…FSAALLKHYF (179 aa)) folds into the Peptidase C3 domain. Catalysis depends on for protease 3C activity residues His-1596, Glu-1627, and Cys-1703. Residues 1966 to 2082 (GHLIAFDYSG…SYPWPIDASL (117 aa)) enclose the RdRp catalytic domain. Mg(2+)-binding residues include Asp-1972 and Asp-2068.

The protein belongs to the picornaviruses polyprotein family. In terms of assembly, interacts with capsid protein VP1 and capsid protein VP3 to form heterotrimeric protomers. Interacts with capsid protein VP0, and capsid protein VP3 to form heterotrimeric protomers. Five protomers subsequently associate to form pentamers which serve as building blocks for the capsid. Interacts with capsid protein VP2, capsid protein VP3 and capsid protein VP4 following cleavage of capsid protein VP0. Interacts with host integrin heterodimer ITGAV/ITGB6. As to quaternary structure, interacts with capsid protein VP1 and capsid protein VP3 in the mature capsid. In terms of assembly, interacts with capsid protein VP0 and capsid protein VP1 to form heterotrimeric protomers. Five protomers subsequently associate to form pentamers which serve as building blocks for the capsid. Interacts with capsid protein VP4 in the mature capsid. Interacts with protein 2C; this interaction may be important for virion morphogenesis. Interacts with capsid protein VP1 and capsid protein VP3. As to quaternary structure, homodimer. In terms of assembly, homohexamer; forms a hexameric ring structure with 6-fold symmetry characteristic of AAA+ ATPases. Interacts (via N-terminus) with host RTN3 (via reticulon domain); this interaction is important for viral replication. Interacts with capsid protein VP3; this interaction may be important for virion morphogenesis. Interacts with protein 3CD. As to quaternary structure, homodimer. Interacts with host GBF1. Interacts (via GOLD domain) with host ACBD3 (via GOLD domain); this interaction allows the formation of a viral protein 3A/ACBD3 heterotetramer with a 2:2 stoichiometry, which will stimulate the recruitment of host PI4KB in order to synthesize PI4P at the viral RNA replication sites. In terms of assembly, interacts with RNA-directed RNA polymerase. Interacts with protein 3AB and with RNA-directed RNA polymerase. As to quaternary structure, interacts with Viral protein genome-linked and with protein 3CD. Requires Mg(2+) as cofactor. Post-translationally, specific enzymatic cleavages in vivo by the viral proteases yield processing intermediates and the mature proteins. In terms of processing, myristoylation is required for the formation of pentamers during virus assembly. Further assembly of 12 pentamers and a molecule of genomic RNA generates the provirion. During virion maturation, immature virions are rendered infectious following cleavage of VP0 into VP4 and VP2. This maturation seems to be an autocatalytic event triggered by the presence of RNA in the capsid and it is followed by a conformational change infectious virion. Post-translationally, myristoylation is required during RNA encapsidation and formation of the mature virus particle. In terms of processing, VPg is uridylylated by the polymerase into VPg-pUpU. This acts as a nucleotide-peptide primer for the genomic RNA replication.

The protein resides in the virion. It is found in the host cytoplasm. It localises to the host cytoplasmic vesicle membrane. Its subcellular location is the host nucleus. It catalyses the reaction a ribonucleoside 5'-triphosphate + H2O = a ribonucleoside 5'-diphosphate + phosphate + H(+). The catalysed reaction is Selective cleavage of Tyr-|-Gly bond in the picornavirus polyprotein.. It carries out the reaction RNA(n) + a ribonucleoside 5'-triphosphate = RNA(n+1) + diphosphate. The enzyme catalyses Selective cleavage of Gln-|-Gly bond in the poliovirus polyprotein. In other picornavirus reactions Glu may be substituted for Gln, and Ser or Thr for Gly.. With respect to regulation, replication or transcription is subject to high level of random mutations by the nucleotide analog ribavirin. Forms an icosahedral capsid of pseudo T=3 symmetry with capsid proteins VP2 and VP3. The capsid is 300 Angstroms in diameter, composed of 60 copies of each capsid protein and enclosing the viral positive strand RNA genome. Capsid protein VP1 mainly forms the vertices of the capsid. Capsid protein VP1 interacts with host integrin ITGAV/ITGB6 to provide virion attachment to target host cells. This attachment induces virion internalization. Tyrosine kinases are probably involved in the entry process. After binding to its receptor, the capsid undergoes conformational changes. Capsid protein VP1 N-terminus (that contains an amphipathic alpha-helix) and capsid protein VP4 are externalized. Together, they shape a pore in the host membrane through which viral genome is translocated to host cell cytoplasm. Its function is as follows. Forms an icosahedral capsid of pseudo T=3 symmetry with capsid proteins VP2 and VP3. The capsid is 300 Angstroms in diameter, composed of 60 copies of each capsid protein and enclosing the viral positive strand RNA genome. Functionally, lies on the inner surface of the capsid shell. After binding to the host receptor, the capsid undergoes conformational changes. Capsid protein VP4 is released, Capsid protein VP1 N-terminus is externalized, and together, they shape a pore in the host membrane through which the viral genome is translocated into the host cell cytoplasm. In terms of biological role, component of immature procapsids, which is cleaved into capsid proteins VP4 and VP2 after maturation. Allows the capsid to remain inactive before the maturation step. Cysteine protease that cleaves viral polyprotein and specific host proteins. It is responsible for the autocatalytic cleavage between the P1 and P2 regions, which is the first cleavage occurring in the polyprotein. Also cleaves the host translation initiation factor EIF4G1, in order to shut down the capped cellular mRNA translation. Inhibits the host nucleus-cytoplasm protein and RNA trafficking by cleaving host members of the nuclear pores. Counteracts stress granule formation probably by antagonizing its assembly or promoting its dissassembly. Cleaves and inhibits host IFIH1/MDA5, thereby inhibiting the type-I IFN production and the establishment of the antiviral state. Cleaves and inhibits host MAVS, thereby inhibiting the type-I IFN production and the establishment of the antiviral state. Its function is as follows. Plays an essential role in the virus replication cycle by acting as a viroporin. Creates a pore in the host endoplasmic reticulum and as a consequence releases Ca2+ in the cytoplasm of infected cell. In turn, high levels of cytoplasmic calcium may trigger membrane trafficking and transport of viral ER-associated proteins to viroplasms, sites of viral genome replication. Functionally, induces and associates with structural rearrangements of intracellular membranes. Displays RNA-binding, nucleotide binding and NTPase activities. May play a role in virion morphogenesis and viral RNA encapsidation by interacting with the capsid protein VP3. In terms of biological role, localizes the viral replication complex to the surface of membranous vesicles. Together with protein 3CD binds the Cis-Active RNA Element (CRE) which is involved in RNA synthesis initiation. Acts as a cofactor to stimulate the activity of 3D polymerase, maybe through a nucleid acid chaperone activity. Localizes the viral replication complex to the surface of membranous vesicles. It inhibits host cell endoplasmic reticulum-to-Golgi apparatus transport and causes the disassembly of the Golgi complex, possibly through GBF1 interaction. This would result in depletion of MHC, trail receptors and IFN receptors at the host cell surface. Plays an essential role in viral RNA replication by recruiting ACBD3 and PI4KB at the viral replication sites, thereby allowing the formation of the rearranged membranous structures where viral replication takes place. Its function is as follows. Acts as a primer for viral RNA replication and remains covalently bound to viral genomic RNA. VPg is uridylylated prior to priming replication into VPg-pUpU. The oriI viral genomic sequence may act as a template for this. The VPg-pUpU is then used as primer on the genomic RNA poly(A) by the RNA-dependent RNA polymerase to replicate the viral genome. During genome replication, the VPg-RNA linkage is removed by the host TDP2, thereby accelerating replication. During the late stage of the replication cycle, host TDP2 is excluded from sites of viral RNA synthesis and encapsidation, allowing for the generation of progeny virions. Functionally, involved in the viral replication complex and viral polypeptide maturation. It exhibits protease activity with a specificity and catalytic efficiency that is different from protease 3C. Protein 3CD lacks polymerase activity. Protein 3CD binds to the 5'UTR of the viral genome. In terms of biological role, replicates the viral genomic RNA on the surface of intracellular membranes. May form linear arrays of subunits that propagate along a strong head-to-tail interaction called interface-I. Covalently attaches UMP to a tyrosine of VPg, which is used to prime RNA synthesis. The positive stranded RNA genome is first replicated at virus induced membranous vesicles, creating a dsRNA genomic replication form. This dsRNA is then used as template to synthesize positive stranded RNA genomes. ss(+)RNA genomes are either translated, replicated or encapsidated. Major viral protease that mediates proteolytic processing of the polyprotein. Cleaves host EIF5B, contributing to host translation shutoff. Also cleaves host PABPC1, contributing to host translation shutoff. Cleaves host NLRP1, triggers host N-glycine-mediated degradation of the autoinhibitory NLRP1 N-terminal fragment. This chain is Genome polyprotein, found in Coxsackievirus A9 (strain Griggs).